A 188-amino-acid chain; its full sequence is Elongation factor P (188 aa).

It belongs to the elongation factor P family.

The protein localises to the cytoplasm. The protein operates within protein biosynthesis; polypeptide chain elongation. In terms of biological role, involved in peptide bond synthesis. Stimulates efficient translation and peptide-bond synthesis on native or reconstituted 70S ribosomes in vitro. Probably functions indirectly by altering the affinity of the ribosome for aminoacyl-tRNA, thus increasing their reactivity as acceptors for peptidyl transferase. This chain is Elongation factor P, found in Chlorobium limicola (strain DSM 245 / NBRC 103803 / 6330).